The sequence spans 1366 residues: DNA-directed RNA polymerase subunit beta (1366 aa).

Belongs to the RNA polymerase beta chain family. As to quaternary structure, the RNAP catalytic core consists of 2 alpha, 1 beta, 1 beta' and 1 omega subunit. When a sigma factor is associated with the core the holoenzyme is formed, which can initiate transcription.

The enzyme catalyses RNA(n) + a ribonucleoside 5'-triphosphate = RNA(n+1) + diphosphate. Functionally, DNA-dependent RNA polymerase catalyzes the transcription of DNA into RNA using the four ribonucleoside triphosphates as substrates. The chain is DNA-directed RNA polymerase subunit beta from Polynucleobacter asymbioticus (strain DSM 18221 / CIP 109841 / QLW-P1DMWA-1) (Polynucleobacter necessarius subsp. asymbioticus).